Here is a 643-residue protein sequence, read N- to C-terminus: Phosphatidylinositol-3,5-bisphosphate 3-phosphatase MTMR2 (643 aa).

Positions 1–52 are disordered; sequence MEKSSSCESLGAQLPAARLPSEDSLSSASTSHSENSVHTKSASAISSDSIST. Phosphoserine is present on residues Ser6 and Ser9. Over residues 23-40 the composition is skewed to polar residues; the sequence is DSLSSASTSHSENSVHTK. Positions 41-52 are enriched in low complexity; that stretch reads SASAISSDSIST. Ser58 carries the phosphoserine modification. Residues 68 to 139 form the GRAM domain; it reads NKLAEMEEPA…GVISRVEKIG (72 aa). A Myotubularin phosphatase domain is found at 205–580; the sequence is GWKLYDPLLE…RHLELWVGYY (376 aa). 3 residues coordinate a 1,2-diacyl-sn-glycero-3-phospho-(1D-myo-inositol-3,5-bisphosphate): Asn330, Asn355, and Ile356. Residues Asn330, Asn355, and Ile356 each contribute to the a 1,2-diacyl-sn-glycero-3-phospho-(1D-myo-inositol-3-phosphate) site. Cys417 functions as the Phosphocysteine intermediate in the catalytic mechanism. Residues Ser418, Asp419, Gly420, Trp421, Asp422, Arg423, Arg459, and Arg463 each contribute to the a 1,2-diacyl-sn-glycero-3-phospho-(1D-myo-inositol-3,5-bisphosphate) site. A 1,2-diacyl-sn-glycero-3-phospho-(1D-myo-inositol-3-phosphate) is bound by residues Ser418, Asp419, Gly420, Trp421, Asp422, and Arg423. Arg463 lines the a 1,2-diacyl-sn-glycero-3-phospho-(1D-myo-inositol-3-phosphate) pocket. The stretch at 593–627 forms a coiled coil; it reads IHSRYKELLAKRAELQRKVEELQREISNRSTSSSE. Residues 614-643 form a disordered region; it reads LQREISNRSTSSSERASSPAQCVTPVQTVV. Over residues 620-631 the composition is skewed to low complexity; that stretch reads NRSTSSSERASS. Over residues 632–643 the composition is skewed to polar residues; it reads PAQCVTPVQTVV.

This sequence belongs to the protein-tyrosine phosphatase family. Non-receptor class myotubularin subfamily. As to quaternary structure, homodimer (via coiled-coil domain). Heterotetramer consisting of one MTMR2 dimer and one SBF2/MTMR13 dimer; specifically in peripheral nerves stabilizes SBF2/MTMR13 at the membranes and increases MTMR2 catalytic activity towards phosphatidylinositol 3,5-bisphosphate and to a lesser extent towards phosphatidylinositol 3-phosphate. Heterodimer with SBF1/MTMR5; acts as an adapter for the phosphatase MTMR2 to regulate MTMR2 catalytic activity and subcellular location. Heterodimer with MTMR12. Post-translationally, phosphorylation at Ser-58 decreases MTMR2 localization to endocytic vesicular structures. As to expression, expressed in sciatic nerve and in Schwann cells (at protein level). Detected in adult dorsal root ganglia, neurons of the central nervous system, motor neurons, cell soma and neurites of sensory neurons, olfactory bulb, cerebellum and hippocampus.

It localises to the cytoplasm. Its subcellular location is the early endosome membrane. The protein localises to the perinuclear region. The protein resides in the cell projection. It is found in the axon. It localises to the endosome membrane. It catalyses the reaction a 1,2-diacyl-sn-glycero-3-phospho-(1D-myo-inositol-3,5-bisphosphate) + H2O = a 1,2-diacyl-sn-glycero-3-phospho-(1D-myo-inositol-5-phosphate) + phosphate. It carries out the reaction a 1,2-diacyl-sn-glycero-3-phospho-(1D-myo-inositol-3-phosphate) + H2O = a 1,2-diacyl-sn-glycero-3-phospho-(1D-myo-inositol) + phosphate. The catalysed reaction is 1,2-dioctanoyl-sn-glycero-3-phospho-(1-D-myo-inositol-3-phosphate) + H2O = 1,2-dioctanoyl-sn-glycero-3-phospho-(1D-myo-inositol) + phosphate. The enzyme catalyses 1,2-dioctanoyl-sn-glycero-3-phospho-(1D-myo-inositol-3,5-bisphosphate) + H2O = 1,2-dioctanoyl-sn-glycero-3-phospho-(1D-myo-inositol-5-phosphate) + phosphate. Its function is as follows. Lipid phosphatase that specifically dephosphorylates the D-3 position of phosphatidylinositol 3-phosphate and phosphatidylinositol 3,5-bisphosphate, generating phosphatidylinositol and phosphatidylinositol 5-phosphate. Regulates the level of these phosphoinositides critical for various biological processes including autophagy initiation and autophagosome maturation. This chain is Phosphatidylinositol-3,5-bisphosphate 3-phosphatase MTMR2, found in Mus musculus (Mouse).